Reading from the N-terminus, the 200-residue chain is MGKTIGLTGSVATGKSTVSNMIQQAGIPLVDADIAARKVVERGTEGLKEIVAYFGEEILLADGTLNRAKLGEIIFKDKEKREKLNEITHPRVKDYMLEARERFFEAGEELVFFDIPLLFESHLESLVDKIVVVWTTPETELKRLMERNNLTKEDALRRIESQMGIDEKARKADFVIDNNESLEKTQKQVLTFIKRFVKNK.

Positions 4-200 (TIGLTGSVAT…TFIKRFVKNK (197 aa)) constitute a DPCK domain. Position 12-17 (12-17 (ATGKST)) interacts with ATP.

This sequence belongs to the CoaE family.

It localises to the cytoplasm. The enzyme catalyses 3'-dephospho-CoA + ATP = ADP + CoA + H(+). It functions in the pathway cofactor biosynthesis; coenzyme A biosynthesis; CoA from (R)-pantothenate: step 5/5. Its function is as follows. Catalyzes the phosphorylation of the 3'-hydroxyl group of dephosphocoenzyme A to form coenzyme A. The protein is Dephospho-CoA kinase of Listeria monocytogenes serotype 4b (strain F2365).